The sequence spans 38 residues: Spheniscin-2 (38 aa).

Intrachain disulfides connect cysteine 5/cysteine 33, cysteine 12/cysteine 27, and cysteine 17/cysteine 34.

Monomer. Secreted into the stomach cavity.

It localises to the secreted. In terms of biological role, has antifungal activity and antibacterial activity against Gram-positive and Gram-negative bacteria. Involved in the process of food preservation in the stomach during the incubation fast. May also be present during infection. The chain is Spheniscin-2 from Aptenodytes patagonicus (King penguin).